The primary structure comprises 96 residues: uncharacterized protein (96 aa).

Positions 38–91 constitute an HTH cro/C1-type domain; the sequence is IEQLRKGTGLKIDDFARVLGVSVAMVKEWESRRVKPSSAELKLMRLIQANPALS. Residues 49–68 constitute a DNA-binding region (H-T-H motif); sequence IDDFARVLGVSVAMVKEWES.

This is an uncharacterized protein from Escherichia coli O157:H7.